We begin with the raw amino-acid sequence, 354 residues long: Deubiquitination-protection protein dph1 (354 aa).

In terms of domain architecture, Ubiquitin-like spans 1–78; the sequence is MTNISLTIKA…SIHLVKTLGQ (78 aa). In terms of domain architecture, UBA spans 309-353; sequence PPEERYAEQLSQLNEMGFVDFERNVQALRRSGGNVQGAIESLLSD.

In terms of biological role, protects ubiquitin chains against dissambly by deubiquitinating enzymes thereby promoting protein degradation. The sequence is that of Deubiquitination-protection protein dph1 (dph1) from Schizosaccharomyces pombe (strain 972 / ATCC 24843) (Fission yeast).